The chain runs to 204 residues: Large ribosomal subunit protein uL4 (204 aa).

The segment at 49-72 is disordered; sequence QKNRAAVSGGGKKPWRQKGTGRAR.

The protein belongs to the universal ribosomal protein uL4 family. Part of the 50S ribosomal subunit.

One of the primary rRNA binding proteins, this protein initially binds near the 5'-end of the 23S rRNA. It is important during the early stages of 50S assembly. It makes multiple contacts with different domains of the 23S rRNA in the assembled 50S subunit and ribosome. Its function is as follows. Forms part of the polypeptide exit tunnel. In Saccharophagus degradans (strain 2-40 / ATCC 43961 / DSM 17024), this protein is Large ribosomal subunit protein uL4.